The sequence spans 2326 residues: Chondroitin sulfate proteoglycan 4 (2326 aa).

The signal sequence occupies residues 1 to 29; the sequence is MLLSPGHPLSAPALALILTLALLVRSTAP. 2 consecutive Laminin G-like domains span residues 30–193 and 203–381; these read ASFF…HEGC and VGLG…AAGC. The segment at 30–640 is globular or compact configuration stabilized by disulfide bonds; sequence ASFFGENHLE…HRGGPAQDLT (611 aa). The neurite growth inhibition stretch occupies residues 30 to 640; sequence ASFFGENHLE…HRGGPAQDLT (611 aa). Over 30–2225 the chain is Extracellular; that stretch reads ASFFGENHLE…SGFLGFLEAN (2196 aa). Asn-130 is a glycosylation site (N-linked (GlcNAc...) asparagine). Cysteines 170 and 193 form a disulfide. Asn-349 is a glycosylation site (N-linked (GlcNAc...) asparagine). Residues Cys-355 and Cys-381 are joined by a disulfide bond. Asn-428 is a glycosylation site (N-linked (GlcNAc...) asparagine). CSPG repeat units lie at residues 429-524, 554-646, and 663-765; these read FTQL…LEVS, PRIV…VSDG, and AIQI…LEVQ. The segment at 575–1044 is interaction with COL6A2; it reads GPEIFQAYDP…RGGQRLLTTD (470 aa). The segment at 632–1450 is interaction with COL5A1; sequence RGGPAQDLTF…SETQTDGFIL (819 aa). N-linked (GlcNAc...) asparagine glycans are attached at residues Asn-686 and Asn-773. CSPG repeat units follow at residues 784–882 and 902–993; these read TVWM…FRVT and NAPV…FVAT. O-linked (Xyl...) (chondroitin sulfate) serine glycosylation occurs at Ser-999. CSPG repeat units follow at residues 1022–1114, 1130–1220, 1242–1341, 1360–1453, 1477–1567, 1585–1683, 1708–1807, 1836–1928, and 1945–2033; these read APVQ…VSDG, YLHV…LSVA, PLQL…LDVA, TVIP…LLAN, PPVI…LSDG, LLSL…LLLS, PSRL…FRAH, PPQP…MSDG, and TIEV…VLAL. 2 N-linked (GlcNAc...) asparagine glycosylation sites follow: Asn-1135 and Asn-1206. Asn-1368 and Asn-1453 each carry an N-linked (GlcNAc...) asparagine glycan. The tract at residues 1590–2225 is neurite growth inhibition; it reads GSRKLTVCPE…SGFLGFLEAN (636 aa). The segment at 1591–2225 is cysteine-containing; that stretch reads SRKLTVCPES…SGFLGFLEAN (635 aa). N-linked (GlcNAc...) asparagine glycosylation is present at Asn-1649. N-linked (GlcNAc...) asparagine glycans are attached at residues Asn-1913, Asn-2020, Asn-2038, Asn-2044, and Asn-2079. The stretch at 2042 to 2151 is one CSPG 15 repeat; that stretch reads TVNVTVQALL…TGDRLTLELQ (110 aa). The disordered stretch occupies residues 2187–2210; sequence RTETEKTGKSTPTGQPGQAASSPM. A compositionally biased stretch (polar residues) spans 2195-2210; the sequence is KSTPTGQPGQAASSPM. The helical transmembrane segment at 2226–2250 threads the bilayer; that stretch reads MFSVIIPVCLVLLLLALILPLLFYL. Over 2251–2326 the chain is Cytoplasmic; it reads RKRNKTGKHD…PALRNGQYWV (76 aa). Thr-2256 bears the Phosphothreonine; by PKC/PRKCA mark. The PDZ-binding signature appears at 2324–2326; it reads YWV.

In terms of assembly, interacts with GRIP1, GRIP2 and GRIA2. Forms a ternary complex with GRIP1 and GRIA2. Interacts with ITGA4 through its chondroitin sulfate glycosaminoglycan. Interacts with BCAR1, CDC42 and ACK1. Interacts with MMP16. Interacts with the first PDZ domain of MPDZ. Interacts with PRKCA. Interacts with LGALS3 and the integrin composed of ITGB1 and ITGA3. Binds TNC, laminin-1, COL5A1 and COL6A2. Interacts with PLG and angiostatin. Binds FGF2 and PDGFA. N-glycosylated. In terms of processing, O-glycosylated; contains glycosaminoglycan chondroitin sulfate which are required for proper localization and function in stress fiber formation. Involved in interaction with MMP16 and ITGA4. Post-translationally, phosphorylation by PRKCA regulates its subcellular location and function in cell motility. As to expression, neural cells and also extraneural tissues, especially in the developing mesenchyme.

Its subcellular location is the cell membrane. It is found in the apical cell membrane. The protein resides in the cell projection. The protein localises to the lamellipodium membrane. It localises to the cell surface. Proteoglycan playing a role in cell proliferation and migration which stimulates endothelial cells motility during microvascular morphogenesis. May also inhibit neurite outgrowth and growth cone collapse during axon regeneration. Cell surface receptor for collagen alpha 2(VI) which may confer cells ability to migrate on that substrate. Binds through its extracellular N-terminus growth factors, extracellular matrix proteases modulating their activity. May regulate MPP16-dependent degradation and invasion of type I collagen participating in melanoma cells invasion properties. May modulate the plasminogen system by enhancing plasminogen activation and inhibiting angiostatin. Also functions as a signal transducing protein by binding through its cytoplasmic C-terminus scaffolding and signaling proteins. May promote retraction fiber formation and cell polarization through Rho GTPase activation. May stimulate alpha-4, beta-1 integrin-mediated adhesion and spreading by recruiting and activating a signaling cascade through CDC42, ACK1 and BCAR1. May activate FAK and ERK1/ERK2 signaling cascades. The sequence is that of Chondroitin sulfate proteoglycan 4 (Cspg4) from Rattus norvegicus (Rat).